The sequence spans 389 residues: Histidinol-phosphate aminotransferase (389 aa).

The residue at position 233 (lysine 233) is an N6-(pyridoxal phosphate)lysine.

The protein belongs to the class-II pyridoxal-phosphate-dependent aminotransferase family. Pyridoxal 5'-phosphate is required as a cofactor.

It carries out the reaction L-histidinol phosphate + 2-oxoglutarate = 3-(imidazol-4-yl)-2-oxopropyl phosphate + L-glutamate. It functions in the pathway amino-acid biosynthesis; L-histidine biosynthesis; L-histidine from 5-phospho-alpha-D-ribose 1-diphosphate: step 7/9. The chain is Histidinol-phosphate aminotransferase (HIS5) from Candida maltosa (Yeast).